We begin with the raw amino-acid sequence, 310 residues long: MNDTPNDIQKPKQGKRFSERLPHWLRQALPKGSVFDFTDKTIKRTGMATVCEEALCPNRTRCWSRKTATYLALGDACSRRCGFCNIDFTKKPLPPDPDEPRKIAESAKILQLKHIVLTMVARDDLEDGGASCLVRIIDTLHKELPESTVEMLASDFQGNVDALHTLLDSGLTIYNHNVETVERLTPVVRHKATYRRSLFMLEQAALYLPDLKIKSGIMVGLGEQESEVKQTLKDLADHGVRIVTIGQYLRPSRLHIPVKSYVTPETFDYYRRVGESLGLFVYAGPFVRSSFNADIVLQDMENKQSKMAKT.

[4Fe-4S] cluster is bound by residues cysteine 51, cysteine 56, cysteine 62, cysteine 77, cysteine 81, cysteine 84, and serine 290. Residues 63–280 (WSRKTATYLA…RRVGESLGLF (218 aa)) form the Radical SAM core domain.

This sequence belongs to the radical SAM superfamily. Lipoyl synthase family. The cofactor is [4Fe-4S] cluster.

Its subcellular location is the cytoplasm. It carries out the reaction [[Fe-S] cluster scaffold protein carrying a second [4Fe-4S](2+) cluster] + N(6)-octanoyl-L-lysyl-[protein] + 2 oxidized [2Fe-2S]-[ferredoxin] + 2 S-adenosyl-L-methionine + 4 H(+) = [[Fe-S] cluster scaffold protein] + N(6)-[(R)-dihydrolipoyl]-L-lysyl-[protein] + 4 Fe(3+) + 2 hydrogen sulfide + 2 5'-deoxyadenosine + 2 L-methionine + 2 reduced [2Fe-2S]-[ferredoxin]. It participates in protein modification; protein lipoylation via endogenous pathway; protein N(6)-(lipoyl)lysine from octanoyl-[acyl-carrier-protein]: step 2/2. Functionally, catalyzes the radical-mediated insertion of two sulfur atoms into the C-6 and C-8 positions of the octanoyl moiety bound to the lipoyl domains of lipoate-dependent enzymes, thereby converting the octanoylated domains into lipoylated derivatives. The protein is Lipoyl synthase of Chlamydia abortus (strain DSM 27085 / S26/3) (Chlamydophila abortus).